Reading from the N-terminus, the 1292-residue chain is Sorbin and SH3 domain-containing protein 1 (1292 aa).

Disordered regions lie at residues 1-29, 73-158, 214-275, and 318-381; these read MSSE…ATAD, LRAS…AQPE, HLQR…SSPL, and REQQ…MDEV. Low complexity predominate over residues 74 to 89; it reads RASSSYRETPSSSPAS. T82 bears the Phosphothreonine mark. A phosphoserine mark is found at S86 and S89. Positions 93–102 are enriched in basic and acidic residues; sequence TRQHESKPGL. Residues E105, L114, V137, S146, S242, and S259 each carry the phosphoserine modification. A compositionally biased stretch (polar residues) spans 114 to 128; sequence LSSSADANGNAQPSS. The segment covering 240 to 252 has biased composition (pro residues); it reads SFSPPPPLVPPAP. The segment covering 266–275 has biased composition (polar residues); the sequence is AVSSTDSSPL. The residue at position 341 (S341) is a Phosphoserine. T344 bears the Phosphothreonine mark. A phosphoserine mark is found at E346 and S350. Residues 354 to 365 are compositionally biased toward basic and acidic residues; sequence AIEKRAKDDSRR. Residues 366-469 form the SoHo domain; the sequence is VVKSTQDLSD…YSPRYSFSED (104 aa). 3 positions are modified to phosphoserine: S369, S374, and N387. The interval 405–534 is disordered; it reads LNRDTPEENP…TRKYRAEPKS (130 aa). The segment covering 437-450 has biased composition (polar residues); the sequence is YTPTYQFPASTPSP. S452, S465, D469, S472, R478, and S481 each carry phosphoserine. Basic and acidic residues predominate over residues 510–534; the sequence is SSERNDWEPPDKKVDTRKYRAEPKS. Y536 carries the post-translational modification Phosphotyrosine; by ABL1. 4 positions are modified to phosphoserine: S556, N603, S609, and S640. Positions 628–650 are disordered; the sequence is APSANVPQSSAISPTPEISSETP. At Y654 the chain carries Phosphotyrosine; by ABL1. Residues S665 and K700 each carry the phosphoserine modification. The segment at 692–716 is disordered; it reads PLQGLSGLKRPSSSASTKDSESPRH. T708 is subject to Phosphothreonine. Phosphoserine is present on residues S713, I730, D735, and I765. Residues 793 to 852 form the SH3 1 domain; that stretch reads SEMRPARAKFDFKAQTLKELPLQKGDIVYIYKQIDQNWYEGEHHGRVGIFPRTYIELLPP. T862 is modified (phosphothreonine). Residues 867–928 form the SH3 2 domain; that stretch reads LEYGEAIAKF…PITYVDVIKR (62 aa). V923 carries the post-translational modification Phosphoserine. A Phosphotyrosine modification is found at Y937. Residues 944 to 954 are compositionally biased toward low complexity; it reads SSPSRSATASP. Disordered regions lie at residues 944–976, 1041–1064, 1106–1150, and 1162–1230; these read SSPS…SRRA, SDRP…TYSL, QLSD…KKSC, and TEQR…SQTS. A phosphoserine mark is found at S945 and S953. Polar residues predominate over residues 955 to 971; it reads QFSSHSKLITPAPSSLP. Positions 1106–1117 are enriched in polar residues; the sequence is QLSDAFSSQSKR. Residues 1119–1136 are compositionally biased toward basic and acidic residues; it reads PWREESGQYERKAERGAG. A compositionally biased stretch (polar residues) spans 1162-1172; that stretch reads TEQRLSDLNTP. Residues 1192-1203 show a composition bias toward basic and acidic residues; that stretch reads QTERHRGGEQAG. Residues 1211-1230 show a composition bias toward polar residues; sequence GSQQPQAQQRRVTPDRSQTS. At Q1213 the chain carries Phosphoserine. The SH3 3 domain occupies 1231-1292; that stretch reads QDLFSYQALY…PGNYVKPLYL (62 aa). At Y1240 the chain carries Phosphotyrosine; by ABL1.

In terms of assembly, interacts (via third SH3 domain) with the Ten-1 ICD form of TENM1; the interaction induces the translocation of SORBS1 to the nucleus. Interacts with INSM1. Interacts with the long isoform of AFDN and with VCL. AFDN and VCL bind to SORBS1 in a competitive manner and do not form a ternary complex. Interacts with ABL1, CBL, CBLB and INPPL1/SHIP2 through the third SH3 domain. Interaction with ABL1 occurs only after insulin stimulation while this has no effect on the interaction with INPPL1. Interacts with the insulin receptor but dissociates from it following insulin stimulation. Also interacts with SCA7, PTK2/FAK1 and flotillin. Interacts (via SH3 domain 2) with PXN. In terms of processing, O-glycosylated. As to expression, detected in skeletal muscle (at protein level). Widely expressed with highest levels in heart and skeletal muscle.

It localises to the cell junction. Its subcellular location is the adherens junction. It is found in the cell membrane. The protein resides in the cytoplasm. The protein localises to the cytoskeleton. It localises to the focal adhesion. Its subcellular location is the nucleus. It is found in the nucleus matrix. Functionally, plays a role in tyrosine phosphorylation of CBL by linking CBL to the insulin receptor. Required for insulin-stimulated glucose transport. Involved in formation of actin stress fibers and focal adhesions. The protein is Sorbin and SH3 domain-containing protein 1 of Homo sapiens (Human).